A 456-amino-acid polypeptide reads, in one-letter code: Outer membrane efflux protein BepC (456 aa).

The signal sequence occupies residues 1–28; sequence MRYTVFKACKELVAAAVLLSGTVLTGQA. The stretch at 312-341 forms a coiled coil; the sequence is RTSAQIRQSKEQLGQARIEVDVVQDKVRQA.

It belongs to the outer membrane factor (OMF) (TC 1.B.17) family. In terms of assembly, probably part of a tripartite efflux pump, which is composed of an outer membrane efflux protein, an inner membrane protein and a protein that expands the periplasmic space. Could form a tripartite pump with BepD and BepE or with BepF and BepG.

The protein resides in the cell outer membrane. Functionally, involved in the efflux of toxic and relatively hydrophobic compounds. Influences survival inside the host. This chain is Outer membrane efflux protein BepC (bepC), found in Brucella suis biovar 1 (strain 1330).